A 470-amino-acid chain; its full sequence is Coproporphyrinogen III oxidase (470 aa).

FAD is bound by residues 12 to 17 (GGGITG), 41 to 42 (EA), lysine 49, 63 to 66 (GPDS), valine 256, tryptophan 409, and 448 to 450 (VGI).

The protein belongs to the protoporphyrinogen/coproporphyrinogen oxidase family. Coproporphyrinogen III oxidase subfamily. Monomer. Requires FAD as cofactor.

Its subcellular location is the cytoplasm. It localises to the cell membrane. The catalysed reaction is coproporphyrinogen III + 3 O2 = coproporphyrin III + 3 H2O2. It functions in the pathway porphyrin-containing compound metabolism; protoheme biosynthesis. Only weakly inhibited by acifluorfen, in contrast to eukaryotic family members. Weakly inhibited by methylacifluorfen. Bilirubin, biliverdin and hemin are all competitive inhibitors. Functionally, involved in coproporphyrin-dependent heme b biosynthesis. Catalyzes the oxidation of coproporphyrinogen III to coproporphyrin III. Can also oxidize protoporphyrinogen IX to protoporphyrin-IX. The specific activity for the oxidation of coproporphyrinogen III is much higher than that for the oxidation of protoporphyrinogen IX. Can also oxidize mesoporphyrinogen IX, but not uroporphyrinogen III. In Bacillus subtilis (strain 168), this protein is Coproporphyrinogen III oxidase.